We begin with the raw amino-acid sequence, 42 residues long: Photosystem I reaction center subunit IX (42 aa).

The chain crosses the membrane as a helical span at residues 8-28; the sequence is YLSTAPVIGVLWMTFTAGFII.

The protein belongs to the PsaJ family.

The protein resides in the plastid. Its subcellular location is the chloroplast thylakoid membrane. Its function is as follows. May help in the organization of the PsaE and PsaF subunits. The protein is Photosystem I reaction center subunit IX of Pyropia yezoensis (Susabi-nori).